The primary structure comprises 471 residues: MKVTQEKLPASQIGLEIEITPEITQKTYEQVIKNLSRTVNIPGFRKGKVPRQVLLQRLGKTHIKAAALEELLQDGIEQAIKQESIAAIGQPRLRSSFDDLINSYEPGQPLTFTAAVDVEPEINLVQYTGLEAKAEEIKYDPARVDEVLEKERQELATLIPVEGRAAQIGDVAVVDFKGVIAKAEGDDENAEPEPIPGGDASDFQVELQEDKFIPGFVTGIVGMNPGDTKEVSAQFPDPYVNQELAGKPAIFTVTLKEIKEKELPELNDDFAQEVSDFDTLEALRASLAERYQKEAEDKTKNNQQEALLGELVKHIEVDLPETLIEKEVDAMLTQTAMRLSQQGLDVKKLFTQDIIPQLRERSRPEAVERLKRSLGLQEVAKRESIAVTPEEIQARVTELVQQYPDEDIDVERLHTIVENELLSEKIIDWLLANSTIELVPEGSLASQESEITAPETEAETIEVTAESTTGE.

In terms of domain architecture, PPIase FKBP-type spans 169 to 264; it reads GDVAVVDFKG…LKEIKEKELP (96 aa). The disordered stretch occupies residues 443-471; sequence SLASQESEITAPETEAETIEVTAESTTGE. The span at 448–471 shows a compositional bias: low complexity; that stretch reads ESEITAPETEAETIEVTAESTTGE.

The protein belongs to the FKBP-type PPIase family. Tig subfamily.

Its subcellular location is the cytoplasm. The enzyme catalyses [protein]-peptidylproline (omega=180) = [protein]-peptidylproline (omega=0). In terms of biological role, involved in protein export. Acts as a chaperone by maintaining the newly synthesized protein in an open conformation. Functions as a peptidyl-prolyl cis-trans isomerase. The sequence is that of Trigger factor from Trichormus variabilis (strain ATCC 29413 / PCC 7937) (Anabaena variabilis).